The primary structure comprises 339 residues: Anthranilate phosphoribosyltransferase (339 aa).

5-phospho-alpha-D-ribose 1-diphosphate contacts are provided by residues Gly81, 84 to 85 (GD), Thr89, 91 to 94 (NIST), 109 to 117 (KHGNRSVSS), and Ser121. Gly81 is a binding site for anthranilate. Ser93 contacts Mg(2+). Asn112 serves as a coordination point for anthranilate. Arg165 is an anthranilate binding site. Mg(2+) contacts are provided by Asp224 and Glu225.

It belongs to the anthranilate phosphoribosyltransferase family. As to quaternary structure, homodimer. Mg(2+) is required as a cofactor.

It carries out the reaction N-(5-phospho-beta-D-ribosyl)anthranilate + diphosphate = 5-phospho-alpha-D-ribose 1-diphosphate + anthranilate. It participates in amino-acid biosynthesis; L-tryptophan biosynthesis; L-tryptophan from chorismate: step 2/5. Functionally, catalyzes the transfer of the phosphoribosyl group of 5-phosphorylribose-1-pyrophosphate (PRPP) to anthranilate to yield N-(5'-phosphoribosyl)-anthranilate (PRA). This is Anthranilate phosphoribosyltransferase from Thermosynechococcus vestitus (strain NIES-2133 / IAM M-273 / BP-1).